The primary structure comprises 213 residues: MSLSPYELEQEWQPRTYVGRLVKEGRIRSLSEIFEKNLPILEPEIVDYLIGPELKSETVDVRLVQKMTDAGRINRFRVVVVIGNENGFVGVGQGKARQLAVAIEKAIRNAKLNIIPVRRGCGSWECLCSEPHSVPFTVRGKSGSVEVILKPAPRGTGLVAGDAAKVVLRLAGIRDVWSFTKGDTRTTINFVKATYNALKQTYKFVTPLDWART.

In terms of domain architecture, S5 DRBM spans 54–117; that stretch reads LKSETVDVRL…RNAKLNIIPV (64 aa).

It belongs to the universal ribosomal protein uS5 family. As to quaternary structure, part of the 30S ribosomal subunit. Contacts protein S4.

Its function is as follows. With S4 and S12 plays an important role in translational accuracy. The polypeptide is Small ribosomal subunit protein uS5 (Hyperthermus butylicus (strain DSM 5456 / JCM 9403 / PLM1-5)).